The chain runs to 410 residues: tRNA-guanine(15) transglycosylase (410 aa).

Asp-87 serves as the catalytic Nucleophile. Positions 122 and 187 each coordinate substrate.

This sequence belongs to the archaeosine tRNA-ribosyltransferase family. The cofactor is Zn(2+).

The catalysed reaction is guanosine(15) in tRNA + 7-cyano-7-deazaguanine = 7-cyano-7-carbaguanosine(15) in tRNA + guanine. The protein operates within tRNA modification; archaeosine-tRNA biosynthesis. Exchanges the guanine residue with 7-cyano-7-deazaguanine (preQ0) at position 15 in the dihydrouridine loop (D-loop) of archaeal tRNAs. The sequence is that of tRNA-guanine(15) transglycosylase from Nanoarchaeum equitans (strain Kin4-M).